The primary structure comprises 354 residues: UPF0283 protein YcjF (354 aa).

Helical transmembrane passes span 71 to 91 (MVTV…VQWV), 101 to 121 (IALG…GSVV), and 214 to 234 (ESAL…FIAW).

It belongs to the UPF0283 family.

The protein resides in the cell inner membrane. This chain is UPF0283 protein YcjF (ycjF), found in Yersinia enterocolitica.